The sequence spans 217 residues: Large ribosomal subunit protein uL3 (217 aa).

Residues 131–155 are disordered; the sequence is FSSSRASHGNSRSHNVPGSIGMAQD. The span at 132–145 shows a compositional bias: low complexity; the sequence is SSSRASHGNSRSHN. Position 154 is an N5-methylglutamine (Q154).

This sequence belongs to the universal ribosomal protein uL3 family. Part of the 50S ribosomal subunit. Forms a cluster with proteins L14 and L19. In terms of processing, methylated by PrmB.

One of the primary rRNA binding proteins, it binds directly near the 3'-end of the 23S rRNA, where it nucleates assembly of the 50S subunit. This is Large ribosomal subunit protein uL3 from Nitrosomonas eutropha (strain DSM 101675 / C91 / Nm57).